The primary structure comprises 576 residues: uncharacterized protein (576 aa).

This sequence belongs to the chlamydial CPn_0065/CT_288/TC_0561 family.

This is an uncharacterized protein from Chlamydia pneumoniae (Chlamydophila pneumoniae).